A 370-amino-acid polypeptide reads, in one-letter code: UDP-N-acetylglucosamine--N-acetylmuramyl-(pentapeptide) pyrophosphoryl-undecaprenol N-acetylglucosamine transferase (370 aa).

Residues 10–12, asparagine 126, serine 200, isoleucine 255, and glutamine 300 contribute to the UDP-N-acetyl-alpha-D-glucosamine site; that span reads TGG.

The protein belongs to the glycosyltransferase 28 family. MurG subfamily.

Its subcellular location is the cell membrane. It catalyses the reaction Mur2Ac(oyl-L-Ala-gamma-D-Glu-L-Lys-D-Ala-D-Ala)-di-trans,octa-cis-undecaprenyl diphosphate + UDP-N-acetyl-alpha-D-glucosamine = beta-D-GlcNAc-(1-&gt;4)-Mur2Ac(oyl-L-Ala-gamma-D-Glu-L-Lys-D-Ala-D-Ala)-di-trans,octa-cis-undecaprenyl diphosphate + UDP + H(+). The protein operates within cell wall biogenesis; peptidoglycan biosynthesis. Cell wall formation. Catalyzes the transfer of a GlcNAc subunit on undecaprenyl-pyrophosphoryl-MurNAc-pentapeptide (lipid intermediate I) to form undecaprenyl-pyrophosphoryl-MurNAc-(pentapeptide)GlcNAc (lipid intermediate II). In Lactobacillus delbrueckii subsp. bulgaricus (strain ATCC 11842 / DSM 20081 / BCRC 10696 / JCM 1002 / NBRC 13953 / NCIMB 11778 / NCTC 12712 / WDCM 00102 / Lb 14), this protein is UDP-N-acetylglucosamine--N-acetylmuramyl-(pentapeptide) pyrophosphoryl-undecaprenol N-acetylglucosamine transferase.